A 436-amino-acid chain; its full sequence is Hydroxycinnamoyltransferase (436 aa).

Catalysis depends on proton acceptor residues His-154 and Asp-383.

The protein belongs to the plant acyltransferase family. In terms of tissue distribution, mostly expressed in stems, and, to a lower extent, in bulbs.

Its pathway is phenylpropanoid metabolism. Hydroxycinnamoyl transferase that catalyzes the transfer of an acyl from p-coumaryol-CoA to various acyl acceptors. Can use feruloyl-CoA and caffeoyl-CoA as acyl donors. In Narcissus pseudonarcissus (Daffodil), this protein is Hydroxycinnamoyltransferase.